A 179-amino-acid chain; its full sequence is Natural killer cells antigen CD94 (179 aa).

The Cytoplasmic segment spans residues 1 to 10 (MAVSRITRWR). The helical; Signal-anchor for type II membrane protein transmembrane segment at 11–31 (LMSMFFGIKCLFLIVALGVLV) threads the bilayer. Topologically, residues 32–179 (KNSFTIQNIQ…NRFICKQLPT (148 aa)) are extracellular. Cystine bridges form between Cys-58/Cys-70, Cys-61/Cys-72, Cys-89/Cys-174, and Cys-152/Cys-166. In terms of domain architecture, C-type lectin spans 68-175 (HQCSCYFISK…CENKNRFICK (108 aa)). Asn-93 carries N-linked (GlcNAc...) asparagine glycosylation.

As to quaternary structure, can form disulfide-bonded heterodimer with NKG2 family members KLRC1 and KLRC2. KLRD1-KLRC1 heterodimer interacts with peptide-bound MHC-E-B2M heterotrimeric complex. KLRD1 plays a prominent role in directly interacting with MHC-E. KLRD1-KLRC1 interacts with much higher affinity with peptide-bound MHC-E-B2M than KLRD1-KLRC2. Interacts with the adapter protein TYROBP/DAP12; this interaction is required for cell surface expression and cell activation.

The protein resides in the cell membrane. Immune receptor involved in self-nonself discrimination. In complex with KLRC1 or KLRC2 on cytotoxic and regulatory lymphocyte subsets, recognizes non-classical major histocompatibility (MHC) class Ib molecule MHC-E loaded with self-peptides derived from the signal sequence of classical MHC class Ia and non-classical MHC class Ib molecules. Enables cytotoxic cells to monitor the expression of MHC class I molecules in healthy cells and to tolerate self. Primarily functions as a ligand binding subunit as it lacks the capacity to signal. Functionally, KLRD1-KLRC1 acts as an immune inhibitory receptor. Key inhibitory receptor on natural killer (NK) cells that regulates their activation and effector functions. Dominantly counteracts T cell receptor signaling on a subset of memory/effector CD8-positive T cells as part of an antigen-driven response to avoid autoimmunity. On intraepithelial CD8-positive gamma-delta regulatory T cells triggers TGFB1 secretion, which in turn limits the cytotoxic programming of intraepithelial CD8-positive alpha-beta T cells, distinguishing harmless from pathogenic antigens. In MHC-E-rich tumor microenvironment, acts as an immune inhibitory checkpoint and may contribute to progressive loss of effector functions of NK cells and tumor-specific T cells, a state known as cell exhaustion. Upon MHC-E-peptide binding, transmits intracellular signals through KLRC1 immunoreceptor tyrosine-based inhibition motifs (ITIMs) by recruiting INPP5D/SHIP-1 and INPPL1/SHIP-2 tyrosine phosphatases to ITIMs, and ultimately opposing signals transmitted by activating receptors through dephosphorylation of proximal signaling molecules. Its function is as follows. KLRD1-KLRC2 acts as an immune activating receptor. On cytotoxic lymphocyte subsets recognizes MHC-E loaded with signal sequence-derived peptides from non-classical MHC class Ib MHC-G molecules, likely playing a role in the generation and effector functions of adaptive NK cells and in maternal-fetal tolerance during pregnancy. Regulates the effector functions of terminally differentiated cytotoxic lymphocyte subsets, and in particular may play a role in adaptive NK cell response to viral infection. Upon MHC-E-peptide binding, transmits intracellular signals via the adapter protein TYROBP/DAP12, triggering the phosphorylation of proximal signaling molecules and cell activation. The protein is Natural killer cells antigen CD94 (Klrd1) of Rattus norvegicus (Rat).